The primary structure comprises 380 residues: Cytochrome b (380 aa).

4 helical membrane passes run 34 to 54 (FGSLLGICLATQILTGLLLAA), 78 to 99 (WLIRNLHANGASFFFICIYLHI), 114 to 134 (WNTGVILLLTLMATAFVGYVL), and 179 to 199 (FFTLHFLLPFMIMGLTLIHLT). Residues H84 and H98 each contribute to the heme b site. 2 residues coordinate heme b: H183 and H197. H202 provides a ligand contact to a ubiquinone. Helical transmembrane passes span 227 to 247 (LKDTLGFMFMLLPLMTLALFS), 289 to 309 (LGGVLALAASVLILFLAPLLH), 321 to 341 (LFQLLFWTLTANLLILTWVGS), and 348 to 368 (FIIIGQLASLTYFTILLILFP).

It belongs to the cytochrome b family. As to quaternary structure, the cytochrome bc1 complex contains 11 subunits: 3 respiratory subunits (MT-CYB, CYC1 and UQCRFS1), 2 core proteins (UQCRC1 and UQCRC2) and 6 low-molecular weight proteins (UQCRH/QCR6, UQCRB/QCR7, UQCRQ/QCR8, UQCR10/QCR9, UQCR11/QCR10 and a cleavage product of UQCRFS1). This cytochrome bc1 complex then forms a dimer. Heme b is required as a cofactor.

The protein localises to the mitochondrion inner membrane. In terms of biological role, component of the ubiquinol-cytochrome c reductase complex (complex III or cytochrome b-c1 complex) that is part of the mitochondrial respiratory chain. The b-c1 complex mediates electron transfer from ubiquinol to cytochrome c. Contributes to the generation of a proton gradient across the mitochondrial membrane that is then used for ATP synthesis. This is Cytochrome b (MT-CYB) from Grus nigricollis (Black-necked crane).